We begin with the raw amino-acid sequence, 318 residues long: Trans-prenyltransferase (318 aa).

A helical membrane pass occupies residues 1–21 (MLHLIYISIIVVLIIILISYT). Isopentenyl diphosphate is bound by residues lysine 85, arginine 88, and histidine 122. The Mg(2+) site is built by aspartate 129 and aspartate 135. Arginine 140 contributes to the dimethylallyl diphosphate binding site. Arginine 141 serves as a coordination point for isopentenyl diphosphate. 3 residues coordinate dimethylallyl diphosphate: lysine 216, threonine 217, and glutamine 254.

Belongs to the FPP/GGPP synthase family. Asfivirus trans-prenyltransferase subfamily. Mg(2+) is required as a cofactor.

The protein localises to the host endoplasmic reticulum. Its subcellular location is the host membrane. The catalysed reaction is isopentenyl diphosphate + dimethylallyl diphosphate = (2E)-geranyl diphosphate + diphosphate. It carries out the reaction isopentenyl diphosphate + (2E)-geranyl diphosphate = (2E,6E)-farnesyl diphosphate + diphosphate. It catalyses the reaction isopentenyl diphosphate + (2E,6E)-farnesyl diphosphate = (2E,6E,10E)-geranylgeranyl diphosphate + diphosphate. The enzyme catalyses isopentenyl diphosphate + (2E,6E,10E)-geranylgeranyl diphosphate = (2E,6E,10E,14E)-geranylfarnesyl diphosphate + diphosphate. It functions in the pathway isoprenoid biosynthesis; farnesyl diphosphate biosynthesis; farnesyl diphosphate from geranyl diphosphate and isopentenyl diphosphate: step 1/1. Its pathway is isoprenoid biosynthesis; geranyl diphosphate biosynthesis; geranyl diphosphate from dimethylallyl diphosphate and isopentenyl diphosphate: step 1/1. The protein operates within isoprenoid biosynthesis; geranylgeranyl diphosphate biosynthesis; geranylgeranyl diphosphate from farnesyl diphosphate and isopentenyl diphosphate: step 1/1. Its function is as follows. Trans-prenyltransferase that catalyzes the sequential condensation of isopentenyl diphosphate (IPP) with different allylic diphosphates, such as dimethylallyl diphosphate (DMAPP), geranyl diphosphate (GPP), farnesyl diphosphate (FPP) and geranylgeranyl diphosphate (GGPP), farnesyl diphosphate being the best allylic substrate. The protein is Trans-prenyltransferase of African swine fever virus (isolate Warthog/Namibia/Wart80/1980) (ASFV).